Consider the following 611-residue polypeptide: Pyrichalasin H cluster regulator pyiR (611 aa).

Residues 11–47 constitute a DNA-binding region (zn(2)-C6 fungal-type); that stretch reads CDRCRGHKLRCIRLDPGPNDTGALLPCKRCVKAGAEC. Disordered regions lie at residues 53–128, 169–192, 265–291, 401–427, 521–550, and 564–593; these read LSVK…LPPW, ALAA…DGTT, GGAG…GRSS, AHEG…AAPQ, RGGL…SDER, and SWFT…RTVE. Positions 59-69 are enriched in basic and acidic residues; sequence GDGHHSAHRAT. Residues 98–109 show a composition bias toward low complexity; the sequence is PTQPAPQRQTQR. Over residues 265 to 279 the composition is skewed to polar residues; the sequence is GGAGSQSLRDQQMQQ. The segment covering 572–587 has biased composition (gly residues); it reads GGSGGSGPGEGTGDSN.

The protein localises to the nucleus. In terms of biological role, transcription factor that specifically regulates the expression of the gene cluster that mediates the biosynthesis of the mycotoxin pyrichalasin H, a tyrosine-derived cytochalasan that inhibits the growth of rice seedlings, but also inhibits lymphocyte capping and actin polymerization and alters cell morphology. Pyrichalasin H is indicated as the responsible agent for the genus-specific pathogenicity of M.grisea toward crabgrass. The polypeptide is Pyrichalasin H cluster regulator pyiR (Pyricularia grisea (Crabgrass-specific blast fungus)).